A 117-amino-acid polypeptide reads, in one-letter code: uncharacterized protein (117 aa).

This sequence belongs to the mimivirus R69 family.

This is an uncharacterized protein from Acanthamoeba polyphaga mimivirus (APMV).